The following is a 377-amino-acid chain: Enoyl reductase cheB (377 aa).

An enoyl reductase (ER) domain region spans residues 18-361; it reads GGSLVIARDV…REISAEKLVV (344 aa). 49–52 is a binding site for NADP(+); that stretch reads CDFK. 137–144 is a binding site for substrate; sequence PCCIATMG. NADP(+)-binding positions include 173-176, 200-203, Y218, 265-266, and T283; these read SSSV, SPKN, and LE. 285–289 provides a ligand contact to substrate; that stretch reads GAIII. 354–355 serves as a coordination point for NADP(+); the sequence is IS.

The protein belongs to the zinc-containing alcohol dehydrogenase family. Heme is required as a cofactor.

It functions in the pathway secondary metabolite biosynthesis. Enoyl reductase; part of the gene cluster that mediates the biosynthesis of chaetoglobosin A which has a unique inhibitory activity against actin polymerization in mammalian cells. Chaetoglobosin A and its intermediates are involved in the morphological differentiation of C.globosum. The first step of the pathway is the synthesis of prochaetoglobosin I via condensation of one acetyl-CoA, 8 malonyl-CoA, and a L-tryptophan molecule by the PKS-NRPS hybrid synthetase cheA, followed by reduction of backbone double bond to install desired geometry by the enoyl reductase cheB. Further multiple oxidation steps performed by the cytochrome P450 monooxygenases cheE and cheG, as well as by the FAD-linked oxidoreductase cheF, lead to the formation of chaetoglobosin A. Depending on the order of action of these reductases, distinct intermediates can be identified. Within the pathway, the cytochrome P450 monooxygenase cheE catalyzes a stereospecific epoxidation on prochaetoglobosin I, cytoglobosin D, and chaetoglobosin J intermediates. The FAD-linked oxidoreductase cheF performs dehydrogenation of the C-20 hydroxyl groups in the 20-dihyrochaetoglobosin A and cytoglobosin D intermediates. Finally, the cytochrome P450 monooxygenase cheG can catalyze the stereospecific dihydroxylation of prochaetoglobosin I and prochaetoglobosin IV at C-19 and C-20, respectively. The Diels-Alderase cheD may play a role in the post-PKS-NRPS biosynthetic steps catalyzing Diels-Alder cyclization. The chain is Enoyl reductase cheB from Chaetomium globosum (strain ATCC 6205 / CBS 148.51 / DSM 1962 / NBRC 6347 / NRRL 1970) (Soil fungus).